Reading from the N-terminus, the 126-residue chain is CD59 glycoprotein (126 aa).

Positions 1–22 (MRARRGFILLLLLAVLCSTGVS) are cleaved as a signal peptide. The 88-residue stretch at 23-110 (LRCYNCLDPV…NGAISLLGKT (88 aa)) folds into the UPAR/Ly6 domain. 5 disulfides stabilise this stretch: C25-C48, C28-C35, C41-C61, C67-C85, and C86-C91. A glycan (N-linked (GlcNAc...) asparagine) is linked at N38. The GPI-anchor amidated asparagine moiety is linked to residue N101. The propeptide at 102–126 (GAISLLGKTALLVTSVLAAILKPCF) is removed in mature form.

Interacts with T-cell surface antigen CD2. Post-translationally, N- and O-glycosylated.

It is found in the cell membrane. The protein resides in the secreted. Potent inhibitor of the complement membrane attack complex (MAC) action, which protects self-cells from damage during complement activation. Acts by binding to the beta-haipins of C8 (C8A and C8B) components of the assembling MAC, forming an intermolecular beta-sheet that prevents incorporation of the multiple copies of C9 required for complete formation of the osmolytic pore. This is CD59 glycoprotein from Rattus norvegicus (Rat).